We begin with the raw amino-acid sequence, 662 residues long: Zinc finger protein 17 (662 aa).

Residues 8-101 (MVFEDVAIHF…LLKDILHLAE (94 aa)) enclose the KRAB domain. 16 consecutive C2H2-type zinc fingers follow at residues 190–212 (YSCTQCGKDFCHQHTLFEHQKIH), 218–240 (YECSECGKLFRYNSDLIKHQRNH), 246–268 (YKCSECGKAFSLKYNVVQHQKIH), 274–296 (YECSECGKAFLRKSHLLQHQRIH), 302–324 (YVCSECGKAFLTQAHLVGHQKIH), 358–380 (FYCCECGKFFMDSCTLIIHQRVH), 386–408 (YECNECGKFFRYRSTLIRHQKVH), 414–436 (YECSECGKFFMDTSTLIIHQRVH), 442–464 (YECNKCGKFFRYCFTLNRHQRVH), 470–492 (YECSECGKFFVDSCTLKSHQRVH), 498–520 (FECSICGKSFRCRSTLDTHQRIH), 526–548 (YECSECGKFFRHNSNHIRHRRNH), 554–576 (FECTECGRVFSQNSHLIRHQKVH), 582–604 (YKCSKCGKFFMDSSTLISHERVH), 610–632 (YECSECGKVFRYNSSLIKHRRIH), and 638–660 (YQCSECGRVFNQNSHLIQHQKVH).

It belongs to the krueppel C2H2-type zinc-finger protein family.

The protein resides in the nucleus. May be involved in transcriptional regulation. The sequence is that of Zinc finger protein 17 (ZNF17) from Homo sapiens (Human).